Reading from the N-terminus, the 104-residue chain is Large ribosomal subunit protein uL23 (104 aa).

It belongs to the universal ribosomal protein uL23 family. Part of the 50S ribosomal subunit. Contacts protein L29, and trigger factor when it is bound to the ribosome.

In terms of biological role, one of the early assembly proteins it binds 23S rRNA. One of the proteins that surrounds the polypeptide exit tunnel on the outside of the ribosome. Forms the main docking site for trigger factor binding to the ribosome. The protein is Large ribosomal subunit protein uL23 of Leptospira borgpetersenii serovar Hardjo-bovis (strain JB197).